The sequence spans 197 residues: dCTP deaminase, dUMP-forming (197 aa).

DCTP contacts are provided by residues 105-110, D123, 131-133, Q152, Y166, K174, and Q178; these read RSSIGR and TLE. Residue E133 is the Proton donor/acceptor of the active site. The interval 161-183 is disordered; the sequence is PAERPYGHPSRDSKYIGQTRPQT. The segment covering 165–174 has biased composition (basic and acidic residues); sequence PYGHPSRDSK.

The protein belongs to the dCTP deaminase family. In terms of assembly, homotrimer.

It catalyses the reaction dCTP + 2 H2O = dUMP + NH4(+) + diphosphate. The protein operates within pyrimidine metabolism; dUMP biosynthesis; dUMP from dCTP: step 1/1. Functionally, bifunctional enzyme that catalyzes both the deamination of dCTP to dUTP and the hydrolysis of dUTP to dUMP without releasing the toxic dUTP intermediate. The sequence is that of dCTP deaminase, dUMP-forming from Methanothermobacter thermautotrophicus (strain ATCC 29096 / DSM 1053 / JCM 10044 / NBRC 100330 / Delta H) (Methanobacterium thermoautotrophicum).